The sequence spans 361 residues: S-adenosylmethionine:tRNA ribosyltransferase-isomerase (361 aa).

It belongs to the QueA family. Monomer.

Its subcellular location is the cytoplasm. It carries out the reaction 7-aminomethyl-7-carbaguanosine(34) in tRNA + S-adenosyl-L-methionine = epoxyqueuosine(34) in tRNA + adenine + L-methionine + 2 H(+). Its pathway is tRNA modification; tRNA-queuosine biosynthesis. In terms of biological role, transfers and isomerizes the ribose moiety from AdoMet to the 7-aminomethyl group of 7-deazaguanine (preQ1-tRNA) to give epoxyqueuosine (oQ-tRNA). The polypeptide is S-adenosylmethionine:tRNA ribosyltransferase-isomerase (Haemophilus ducreyi (strain 35000HP / ATCC 700724)).